The sequence spans 121 residues: Basic phospholipase A2 3 (121 aa).

Cystine bridges form between cysteine 26–cysteine 115, cysteine 28–cysteine 44, cysteine 43–cysteine 95, cysteine 49–cysteine 121, cysteine 50–cysteine 88, cysteine 57–cysteine 81, and cysteine 75–cysteine 86. Residues tyrosine 27, glycine 29, and glycine 31 each contribute to the Ca(2+) site. Histidine 47 is an active-site residue. Aspartate 48 lines the Ca(2+) pocket. Aspartate 89 is an active-site residue.

The protein belongs to the phospholipase A2 family. Group II subfamily. D49 sub-subfamily. The cofactor is Ca(2+). Expressed by the venom gland.

Its subcellular location is the secreted. It catalyses the reaction a 1,2-diacyl-sn-glycero-3-phosphocholine + H2O = a 1-acyl-sn-glycero-3-phosphocholine + a fatty acid + H(+). PLA2 catalyzes the calcium-dependent hydrolysis of the 2-acyl groups in 3-sn-phosphoglycerides. The polypeptide is Basic phospholipase A2 3 (Daboia russelii (Russel's viper)).